Reading from the N-terminus, the 261-residue chain is Large ribosomal subunit protein uL2 (261 aa).

Residues 207-233 (VEHPHGGGNHQHIGKASTVKRGTPPGR) are disordered.

This sequence belongs to the universal ribosomal protein uL2 family.

It is found in the cytoplasm. This chain is Large ribosomal subunit protein uL2 (RpL8), found in Aedes albopictus (Asian tiger mosquito).